The following is a 173-amino-acid chain: Endosomal/vacuolar adapter protein YPT35 (173 aa).

Positions 40-173 constitute a PX domain; that stretch reads ERAFVTNCTI…LVIQFLRPRK (134 aa).

It belongs to the YPT35 family.

It is found in the endosome membrane. Its subcellular location is the vacuole membrane. In terms of biological role, recruits the lipid transfer protein VPS13 to endosomal and vacuolar membranes. This Candida glabrata (strain ATCC 2001 / BCRC 20586 / JCM 3761 / NBRC 0622 / NRRL Y-65 / CBS 138) (Yeast) protein is Endosomal/vacuolar adapter protein YPT35 (YPT35).